The chain runs to 273 residues: MDFLIVLKALMMGLVEGFTEFLPISSTGHLIVFGNLIGFHSNHKVFEIAIQLGAVLAVVFEYRQRFSNVLHGVGKDRKANRFVLNLAIAFIPAAVMGLLFDKQIKEYLFNPLSVAVMLVLGGFFILWVEKRQSRAEPKIADVDALRPIDALMIGVAQVFALVPGTSRSGSTVMGGMLWGIERKTATEFSFFLAVPMMVAATAYDVLKHYRFFTLHDVGLILIGFIAAFVSGLVAVKALLKFVSKKNYIPFAYYRIVFGIVIIILWLSGWISWE.

A run of 7 helical transmembrane segments spans residues 13–35 (GLVE…VFGN), 45–62 (VFEI…VFEY), 82–102 (FVLN…LFDK), 108–128 (LFNP…ILWV), 186–206 (TEFS…YDVL), 219–239 (LILI…KALL), and 250–270 (FAYY…SGWI).

It belongs to the UppP family.

The protein resides in the cell inner membrane. It catalyses the reaction di-trans,octa-cis-undecaprenyl diphosphate + H2O = di-trans,octa-cis-undecaprenyl phosphate + phosphate + H(+). Functionally, catalyzes the dephosphorylation of undecaprenyl diphosphate (UPP). Confers resistance to bacitracin. The polypeptide is Undecaprenyl-diphosphatase (Neisseria gonorrhoeae (strain ATCC 700825 / FA 1090)).